The primary structure comprises 121 residues: uncharacterized protein (121 aa).

The segment at 1–121 is disordered; the sequence is MGQVLSICSS…QQEREQIKWD (121 aa). Residue G2 is the site of N-myristoyl glycine attachment. C8 carries the S-palmitoyl cysteine lipid modification. Basic and acidic residues-rich tracts occupy residues 11–23, 73–83, 90–105, and 112–121; these read KSKE…EKPT, AAEKRNIEKKK, RQLE…EHLQ, and QQEREQIKWD.

The protein to yeast YGL108C. Post-translationally, myristoylated. The N-myristoylated protein is further palmitoylated.

The protein localises to the cytoplasm. The protein resides in the cytosol. This is an uncharacterized protein from Schizosaccharomyces pombe (strain 972 / ATCC 24843) (Fission yeast).